Here is a 388-residue protein sequence, read N- to C-terminus: Meiotic driver wtf13 (388 aa).

Residues 1 to 29 (MKNKDYPLRSSMDELSTKNDNEIDLEKGP) show a composition bias toward basic and acidic residues. Residues 1–39 (MKNKDYPLRSSMDELSTKNDNEIDLEKGPLPEYNSEDGS) form a disordered region. 9 consecutive transmembrane segments (helical) span residues 89–109 (LLIS…CVNP), 119–139 (AFSV…FCFF), 152–172 (VTVI…AQCV), 182–202 (CVKV…VGLY), 207–227 (DLVV…FGCV), 243–263 (CSIS…IWTL), 267–287 (LFGL…TKGL), 297–317 (ATGY…LFFY), and 331–351 (FIGN…GGIG).

Belongs to the WTF family. In terms of assembly, homomer. Forms protein aggregates. The two isoforms can interact with each other and with themselves. High sequence similarity is required for their interaction.

Its subcellular location is the spore membrane. It localises to the vacuole membrane. It is found in the ascus epiplasm. The protein resides in the cytoplasm. The protein localises to the endoplasmic reticulum membrane. Its function is as follows. Promotes unequal transmission of alleles from the parental zygote to progeny spores by acting as poison/antidote system where the poison and antidote proteins are produced from the same locus; the poison component is trans-acting and targets all spores within an ascus whereas the antidote component is spore-specific, leading to poisoning of all progeny that do not inherit the allele. In terms of biological role, localizes isoform 2 to the vacuole thereby facilitating its degradation. In addition to suppressing isoform 2, also suppresses S.pombe strain FY29033 wtf18 isoform 2. Functionally, forms toxic aggregates that disrupt spore maturation. In Schizosaccharomyces pombe (strain 972 / ATCC 24843) (Fission yeast), this protein is Meiotic driver wtf13.